We begin with the raw amino-acid sequence, 421 residues long: UDP-N-acetylglucosamine 1-carboxyvinyltransferase (421 aa).

22–23 serves as a coordination point for phosphoenolpyruvate; sequence KN. A UDP-N-acetyl-alpha-D-glucosamine-binding site is contributed by arginine 93. The active-site Proton donor is cysteine 117. Cysteine 117 carries the post-translational modification 2-(S-cysteinyl)pyruvic acid O-phosphothioketal. Residues 122-126, aspartate 308, and isoleucine 330 contribute to the UDP-N-acetyl-alpha-D-glucosamine site; that span reads RPVDL.

The protein belongs to the EPSP synthase family. MurA subfamily.

It is found in the cytoplasm. It catalyses the reaction phosphoenolpyruvate + UDP-N-acetyl-alpha-D-glucosamine = UDP-N-acetyl-3-O-(1-carboxyvinyl)-alpha-D-glucosamine + phosphate. Its pathway is cell wall biogenesis; peptidoglycan biosynthesis. Functionally, cell wall formation. Adds enolpyruvyl to UDP-N-acetylglucosamine. In Pseudomonas putida (strain W619), this protein is UDP-N-acetylglucosamine 1-carboxyvinyltransferase.